A 728-amino-acid chain; its full sequence is Catalase-peroxidase 1 (728 aa).

The segment at residues 91–218 (WHSAGTYRTA…LAAVQMGLIY (128 aa)) is a cross-link (tryptophyl-tyrosyl-methioninium (Trp-Tyr) (with M-244)). Residue His-92 is the Proton acceptor of the active site. A cross-link (tryptophyl-tyrosyl-methioninium (Tyr-Met) (with W-91)) is located at residues 218–244 (YVNPEGPDGNPDPVAAAHDIRETFARM). His-259 lines the heme b pocket.

The protein belongs to the peroxidase family. Peroxidase/catalase subfamily. As to quaternary structure, homodimer or homotetramer. Heme b serves as cofactor. Formation of the three residue Trp-Tyr-Met cross-link is important for the catalase, but not the peroxidase activity of the enzyme.

The catalysed reaction is H2O2 + AH2 = A + 2 H2O. It catalyses the reaction 2 H2O2 = O2 + 2 H2O. Its function is as follows. Bifunctional enzyme with both catalase and broad-spectrum peroxidase activity. The chain is Catalase-peroxidase 1 from Burkholderia cenocepacia (strain HI2424).